Consider the following 145-residue polypeptide: Probable disulfide formation protein (145 aa).

Residues 9 to 28 (ENLLLLIWVQAFLALAGSLF) traverse the membrane as a helical segment. Cys38 and Cys41 form a disulfide bridge. Helical transmembrane passes span 43 to 62 (YQRILMYPLVLIYGVAAIKK) and 69 to 86 (PGLFMSGIGLLVSTYHYL). Cys100 and Cys106 form a disulfide bridge. Residues 115 to 137 (GFISIPFMAGVAFLIIFVLHLLI) traverse the membrane as a helical segment.

Belongs to the DsbB family. BdbC subfamily.

It is found in the cell membrane. Functionally, required for disulfide bond formation in some proteins. The polypeptide is Probable disulfide formation protein (Oceanobacillus iheyensis (strain DSM 14371 / CIP 107618 / JCM 11309 / KCTC 3954 / HTE831)).